Consider the following 761-residue polypeptide: Isocyanide synthase xanB (761 aa).

A disordered region spans residues 24-128 (LLGSYETKAP…GKGTKADPSH (105 aa)). Over residues 36–48 (ETSEIAASSSSSE) the composition is skewed to low complexity. Over residues 93–102 (TVSTPQSSDN) the composition is skewed to polar residues. Residues 115–126 (FKDEGKGTKADP) show a composition bias toward basic and acidic residues.

This sequence belongs to the isocyanide synthase family.

It participates in secondary metabolite biosynthesis. Its function is as follows. Isocyanide synthase; part of the gene cluster that mediates the biosynthesis of the isocyanide xanthocillin and its derivatives. The first step of the pathway consists in the conversion of tyrosine into a vinyl-isonitrile intermediate by the isocyanide synthase xanB. Subsequent oxidative dimerization of this intermediate to form xanthocillin may involve the cytochrome P450 monooxygenase xanG, whose expression is coregulated with that of XanB. Xanthocillin can be further modified by the isonitrile hydratase-like protein xanA which introduces N-formyl groups and the methyltransferase xanE which introduces methyl groups, leading to the production of several derivatives including fumiformamide. Finally, fumiformamide can be subject to both oxidative and reductive cyclization to yield melanocins E and F, respectively. This chain is Isocyanide synthase xanB, found in Aspergillus fumigatus (strain ATCC MYA-4609 / CBS 101355 / FGSC A1100 / Af293) (Neosartorya fumigata).